A 399-amino-acid polypeptide reads, in one-letter code: Acetate kinase (399 aa).

A Mg(2+)-binding site is contributed by Asn7. Lys14 is an ATP binding site. Residue Arg91 coordinates substrate. Asp148 acts as the Proton donor/acceptor in catalysis. ATP contacts are provided by residues 208–212 and 283–285; these read HLGNG and DFR. A Mg(2+)-binding site is contributed by Glu384.

It belongs to the acetokinase family. As to quaternary structure, homodimer. Mg(2+) serves as cofactor. Mn(2+) is required as a cofactor.

It is found in the cytoplasm. It carries out the reaction acetate + ATP = acetyl phosphate + ADP. The protein operates within metabolic intermediate biosynthesis; acetyl-CoA biosynthesis; acetyl-CoA from acetate: step 1/2. In terms of biological role, catalyzes the formation of acetyl phosphate from acetate and ATP. Can also catalyze the reverse reaction. The chain is Acetate kinase from Dictyoglomus thermophilum (strain ATCC 35947 / DSM 3960 / H-6-12).